A 127-amino-acid polypeptide reads, in one-letter code: Protein ApaG (127 aa).

The 125-residue stretch at 3-127 (NDQKYDIKVQ…FILSVPRVLH (125 aa)) folds into the ApaG domain.

This is Protein ApaG from Nitrosomonas eutropha (strain DSM 101675 / C91 / Nm57).